We begin with the raw amino-acid sequence, 311 residues long: MQRFIKWLAVITSLDLLIVLLGGALVTKTGSGQGCGKSWPLCNGEFVPSNLSMETIIELSHRLTSGSAGILVTLLCILSWKYYKHVRETKTLAILSFVFLVAQALMGAAAVVWGQMPAVLAIHFGISLISFASVILLTCLIFEIDQKFDARSLIMDKKMKFHIYGVTIYSYIVVYTGALVRHERASLACPDFPLCSKNRPMPTQLHEWVQMGHRVAAMLIFAWILYAMILAIRHYKQQPVVYWGWIISFILVTLQAVVGVLVVFTNASLAMALLHSLFISCLFAVLCYLVMLGTRIKVNAKEAGSTSKQTK.

Residues 1-6 (MQRFIK) are Cytoplasmic-facing. Residues 7–27 (WLAVITSLDLLIVLLGGALVT) form a helical membrane-spanning segment. The Extracellular segment spans residues 28-62 (KTGSGQGCGKSWPLCNGEFVPSNLSMETIIELSHR). C35 and C42 are oxidised to a cystine. E58 is an active-site residue. H61 lines the heme o pocket. A helical membrane pass occupies residues 63-83 (LTSGSAGILVTLLCILSWKYY). The Cytoplasmic portion of the chain corresponds to 84-91 (KHVRETKT). A helical membrane pass occupies residues 92-112 (LAILSFVFLVAQALMGAAAVV). Residues 113–121 (WGQMPAVLA) lie on the Extracellular side of the membrane. The chain crosses the membrane as a helical span at residues 122-142 (IHFGISLISFASVILLTCLIF). H123 contacts heme o. The Cytoplasmic segment spans residues 143-159 (EIDQKFDARSLIMDKKM). The helical transmembrane segment at 160-180 (KFHIYGVTIYSYIVVYTGALV) threads the bilayer. The Extracellular segment spans residues 181-211 (RHERASLACPDFPLCSKNRPMPTQLHEWVQM). C189 and C195 form a disulfide bridge. Residues 212-232 (GHRVAAMLIFAWILYAMILAI) traverse the membrane as a helical segment. H213 provides a ligand contact to heme b. Residues 233–243 (RHYKQQPVVYW) are Cytoplasmic-facing. The chain crosses the membrane as a helical span at residues 244-264 (GWIISFILVTLQAVVGVLVVF). The Extracellular portion of the chain corresponds to 265–271 (TNASLAM). A helical transmembrane segment spans residues 272–292 (ALLHSLFISCLFAVLCYLVML). A heme b-binding site is contributed by H275. The Cytoplasmic segment spans residues 293-311 (GTRIKVNAKEAGSTSKQTK).

Belongs to the COX15/CtaA family. Type 1 subfamily. In terms of assembly, interacts with CtaB. Heme b serves as cofactor.

It is found in the cell membrane. The enzyme catalyses Fe(II)-heme o + 2 A + H2O = Fe(II)-heme a + 2 AH2. It functions in the pathway porphyrin-containing compound metabolism; heme A biosynthesis; heme A from heme O: step 1/1. Functionally, catalyzes the conversion of heme O to heme A by two successive hydroxylations of the methyl group at C8. The first hydroxylation forms heme I, the second hydroxylation results in an unstable dihydroxymethyl group, which spontaneously dehydrates, resulting in the formyl group of heme A. The sequence is that of Heme A synthase from Bacillus cereus (strain G9842).